Reading from the N-terminus, the 299-residue chain is Ornithine carbamoyltransferase (299 aa).

Residues 52 to 55, Gln-79, Arg-103, and 130 to 133 each bind carbamoyl phosphate; these read STRT and HPCQ. Residues Asn-161, Asp-218, and 222 to 223 contribute to the L-ornithine site; that span reads SM. Carbamoyl phosphate-binding positions include 258–259 and Arg-286; that span reads CL.

Belongs to the aspartate/ornithine carbamoyltransferase superfamily. OTCase family.

Its subcellular location is the cytoplasm. The catalysed reaction is carbamoyl phosphate + L-ornithine = L-citrulline + phosphate + H(+). It functions in the pathway amino-acid biosynthesis; L-arginine biosynthesis; L-arginine from L-ornithine and carbamoyl phosphate: step 1/3. Its function is as follows. Reversibly catalyzes the transfer of the carbamoyl group from carbamoyl phosphate (CP) to the N(epsilon) atom of ornithine (ORN) to produce L-citrulline. The chain is Ornithine carbamoyltransferase from Ruthia magnifica subsp. Calyptogena magnifica.